A 498-amino-acid chain; its full sequence is MSLADELLADLEEAAEEEEENLIDEDDLETIEEVQEEMQVDLNAESVKSIAKLSDSKLFSEILLKIDGYIKKQPKASEVMGPVEAAPEYKVIVDANNLTVEIENELNIIHKFIRDKYSKRFPELESLVPNALDYIRTVKELGNNLDKCKNNENLQQILTNATIMVVSVTASTTQGQQLTDEELERIEEACDMALELNQSKHRIYEYVESRMSFIAPNLSIIVGASTAAKIMGIAGGLTNLSKMPACNVMLLGAQRKTLSGFSSTSVLPHTGYIYHSDIVQSLPPDLHRKAARLVSAKCTLAARVDSFHESSEGKVGYDLKEEIERKFDKWQEPPPVKQVKPLPAPLDGQRKKRGGRRYRKMKERLGLTEIRKQANRMSFAEIEEDAYQEDLGFSLGHLGKSGSGRIRQAQVNEATKARISKTLQRTLQKQSVVYGGKSTIRDRSSGTASSVAFTPLQGLEIVNPQAAEKKVAEANQKYFSSMAEFLKVKSEKSGTMTQ.

Coiled coils occupy residues 84-119 and 180-214; these read EAAP…KYSK and DEEL…MSFI. The Nop domain occupies 214–332; it reads IAPNLSIIVG…IERKFDKWQE (119 aa). A disordered region spans residues 333 to 356; that stretch reads PPPVKQVKPLPAPLDGQRKKRGGR. Residues 350 to 363 carry the Nuclear localization signal (NLS) motif; that stretch reads RKKRGGRRYRKMKE.

Belongs to the PRP31 family. In terms of assembly, identified in the spliceosome B complex. Component of the U4/U6-U5 tri-snRNP complex. Component of some MLL1/MLL complex.

The protein resides in the nucleus. The protein localises to the nucleus speckle. It localises to the cajal body. Its function is as follows. Involved in pre-mRNA splicing as component of the spliceosome. Required for the assembly of the U4/U5/U6 tri-snRNP complex, one of the building blocks of the spliceosome. The protein is U4/U6 small nuclear ribonucleoprotein Prp31 (prpf31) of Xenopus tropicalis (Western clawed frog).